The chain runs to 662 residues: UPF0313 protein CPF_1407 (662 aa).

In terms of domain architecture, Radical SAM core spans A296 to K567. Residues C310, C314, and C317 each coordinate [4Fe-4S] cluster. The tract at residues I596–R662 is disordered. Over residues S618–K632 the composition is skewed to basic and acidic residues. Positions R633–K644 are enriched in basic residues.

This sequence belongs to the UPF0313 family. [4Fe-4S] cluster serves as cofactor.

The sequence is that of UPF0313 protein CPF_1407 from Clostridium perfringens (strain ATCC 13124 / DSM 756 / JCM 1290 / NCIMB 6125 / NCTC 8237 / Type A).